The chain runs to 195 residues: Interferon tau-11 (195 aa).

Residues 1-23 form the signal peptide; that stretch reads MAFVLSLLMALVLVSYGPGGSLG. Cystine bridges form between Cys24–Cys122 and Cys52–Cys162. The N-linked (GlcNAc...) asparagine glycan is linked to Asn101.

The protein belongs to the alpha/beta interferon family. IFN-alphaII subfamily. In terms of tissue distribution, constitutively and exclusively expressed in the mononuclear cells of the extraembryonic trophectoderm.

It is found in the secreted. Paracrine hormone primarily responsible for maternal recognition of pregnancy. Interacts with endometrial receptors, probably type I interferon receptors, and blocks estrogen receptor expression, preventing the estrogen-induced increase in oxytocin receptor expression in the endometrium. This results in the suppression of the pulsatile endometrial release of the luteolytic hormone prostaglandin F2-alpha, hindering the regression of the corpus luteum (luteolysis) and therefore a return to ovarian cyclicity. This, and a possible direct effect of IFN-tau on prostaglandin synthesis, leads in turn to continued ovarian progesterone secretion, which stimulates the secretion by the endometrium of the nutrients required for the growth of the conceptus. In summary, displays particularly high antiviral and antiproliferative potency concurrently with particular weak cytotoxicity, high antiluteolytic activity and immunomodulatory properties. In contrast with other IFNs, IFN-tau is not virally inducible. The protein is Interferon tau-11 (IFNT11) of Ovis aries (Sheep).